A 66-amino-acid chain; its full sequence is Opicalcin-1 (66 aa).

The N-terminal stretch at 1-22 (MKPSLIIVTFIVVFMAISCVAA) is a signal peptide. Positions 23 to 31 (DDEQETWIE) are excised as a propeptide. Cystine bridges form between C36/C50, C43/C54, and C49/C65. Residues 55–57 (KRR) are essential for stimulation of [3H]ryanodine binding to RYR1.

Belongs to the scorpion calcin family. In terms of tissue distribution, expressed by the venom gland.

It localises to the secreted. Its function is as follows. This toxin stabilizes ryanodine receptor 1 (RyR1) opening in a long-lasting subconductance state (35% of the full conductance state). Furthermore, it triggers calcium release from sarcoplasmic vesicles (2 nM are enough to induce a sharp release, and 67% of the total calcium is released after toxin (100 nM) addition) probably by acting as a cell-penetrating peptide (CPP). In addition, it has been shown to dose-dependently stimulate ryanodine binding to RyR1 (EC(50)=0.3 nM). It also augments the bell-shaped calcium-[3H]ryanodine binding curve that is maximal at about 10 uM calcium concentration. It binds a different site as ryanodine. It acts synergistically with caffeine. In vivo, intracerebroventricular injection into mice induces neurotoxic symptoms, followed by death. In Opistophthalmus carinatus (African yellow leg scorpion), this protein is Opicalcin-1.